The primary structure comprises 150 residues: Transcription antitermination protein NusB (150 aa).

The protein belongs to the NusB family.

In terms of biological role, involved in transcription antitermination. Required for transcription of ribosomal RNA (rRNA) genes. Binds specifically to the boxA antiterminator sequence of the ribosomal RNA (rrn) operons. This chain is Transcription antitermination protein NusB, found in Streptococcus pyogenes serotype M3 (strain ATCC BAA-595 / MGAS315).